Consider the following 143-residue polypeptide: MIVQVINGPNLGRLGRREPDVYGDTTHDQLAALIEAEAAALGLKAIVRQSDSEAELLDWIHGAADANQPVILNAGGLTHTSVALRDACAELSAPLIEVHISNVHAREEFRRHSYLSPVATGVIVGLGVQGYLLALRYLAGRPA.

Catalysis depends on Tyr22, which acts as the Proton acceptor. Substrate contacts are provided by Asn73, His79, and Asp86. The active-site Proton donor is His99. Residues 100–101 (IS) and Arg110 contribute to the substrate site.

This sequence belongs to the type-II 3-dehydroquinase family. Homododecamer.

The enzyme catalyses 3-dehydroquinate = 3-dehydroshikimate + H2O. It functions in the pathway metabolic intermediate biosynthesis; chorismate biosynthesis; chorismate from D-erythrose 4-phosphate and phosphoenolpyruvate: step 3/7. In terms of biological role, catalyzes a trans-dehydration via an enolate intermediate. This is 3-dehydroquinate dehydratase from Mycobacterium avium (strain 104).